Consider the following 101-residue polypeptide: Small ribosomal subunit protein uS14 (101 aa).

The protein belongs to the universal ribosomal protein uS14 family. Part of the 30S ribosomal subunit. Contacts proteins S3 and S10.

Functionally, binds 16S rRNA, required for the assembly of 30S particles and may also be responsible for determining the conformation of the 16S rRNA at the A site. The protein is Small ribosomal subunit protein uS14 of Cronobacter sakazakii (strain ATCC BAA-894) (Enterobacter sakazakii).